The sequence spans 411 residues: S-adenosylmethionine synthase (411 aa).

Residue H15 participates in ATP binding. D17 serves as a coordination point for Mg(2+). E43 contributes to the K(+) binding site. L-methionine contacts are provided by E56 and Q99. The segment at 99 to 109 (QSQEIAQGVDT) is flexible loop. Residues 179-181 (DGK), D260, 266-267 (RK), A283, and K287 each bind ATP. Residue D260 coordinates L-methionine. K291 contacts L-methionine.

It belongs to the AdoMet synthase family. In terms of assembly, homotetramer; dimer of dimers. It depends on Mg(2+) as a cofactor. K(+) is required as a cofactor.

The protein resides in the cytoplasm. It catalyses the reaction L-methionine + ATP + H2O = S-adenosyl-L-methionine + phosphate + diphosphate. It participates in amino-acid biosynthesis; S-adenosyl-L-methionine biosynthesis; S-adenosyl-L-methionine from L-methionine: step 1/1. Functionally, catalyzes the formation of S-adenosylmethionine (AdoMet) from methionine and ATP. The overall synthetic reaction is composed of two sequential steps, AdoMet formation and the subsequent tripolyphosphate hydrolysis which occurs prior to release of AdoMet from the enzyme. The chain is S-adenosylmethionine synthase from Corynebacterium jeikeium (strain K411).